The chain runs to 512 residues: Tabersonine 16-hydroxylase 2 (512 aa).

Position 1 (Met-1) is a topological domain, lumenal. Residues Glu-2–Leu-22 traverse the membrane as a helical segment. At Lys-23–Tyr-512 the chain is on the cytoplasmic side. Heme is bound at residue Cys-445.

It belongs to the cytochrome P450 family. The cofactor is heme. In terms of tissue distribution, expressed at low levels in roots, fruits, stems, flower buds and flowers, but highly expressed in young leaves. Detected in adaxial and abaxial epidermis cells.

The protein localises to the endoplasmic reticulum membrane. The catalysed reaction is (-)-tabersonine + reduced [NADPH--hemoprotein reductase] + O2 = 16-hydroxytabersonine + oxidized [NADPH--hemoprotein reductase] + H2O + H(+). In terms of biological role, involved in the foliar biosynthesis of vindoline, a precursor of vinblastine and vincristine. Hydroxylates specifically tabersonine, 2,3-dihydrotabersonine and 2,3-dihydro-3-hydroxytabersonine, but has no activity with naringenin, tryptamine, secologanin, strictosidine, ajmalicine, vindoline and catharanthine. The polypeptide is Tabersonine 16-hydroxylase 2 (Catharanthus roseus (Madagascar periwinkle)).